The following is a 583-amino-acid chain: MTNRNIFYATTLVDELARAGLRFVCLAPGSRNTPLVLACARHPAIKVFSHLDERSAAFFALGLALATDTPAAVVCTSGSAAANFFPAIVEAHQAGVPLLALTADRPHELRDSGANQTIDQVKMFGGFVRWSVDLALPEATPPPVVVRSLRTLAARAMAIAGGEPPGVVHLNLPFRPPLEPTPVAGDITAPPDAAQPRQAGAPYTYCLTATRSGVPEAVIEQIASLLQQHERGLIVCGPRCPSGEFGALVSELADRTGYPALVDGVSGIRFGYPGVIGGYETFLFGEHSFPPPDVVVRFGAVPTSKWLNQYLDTAAPSAVIHVRAGGVWADDSHRVSHFIAADESAFIRALLPHLKERRGAWIQMFEEAEAQVWSAVEAALNDEPYFDGAAVYDAVSLLPEGAALFVGNSLPVRHLDQFGKPGARRIHAFANRGASGIDGNISTALGVGAGRPDTPMAAIVGDITFYHDMNGLLAVRRCGVPITIVLLNNDGGGIFHRLPINRFEPEFTDYFVTPHGLHFAHAAKMYGLDYVQVRDREAFRRAFRESIEARAATIIELRTDARADLARRPALMRSAKASDVRGL.

Belongs to the TPP enzyme family. MenD subfamily. As to quaternary structure, homodimer. The cofactor is Mg(2+). Requires Mn(2+) as cofactor. It depends on thiamine diphosphate as a cofactor.

The catalysed reaction is isochorismate + 2-oxoglutarate + H(+) = 5-enolpyruvoyl-6-hydroxy-2-succinyl-cyclohex-3-ene-1-carboxylate + CO2. The protein operates within quinol/quinone metabolism; 1,4-dihydroxy-2-naphthoate biosynthesis; 1,4-dihydroxy-2-naphthoate from chorismate: step 2/7. It functions in the pathway quinol/quinone metabolism; menaquinone biosynthesis. Functionally, catalyzes the thiamine diphosphate-dependent decarboxylation of 2-oxoglutarate and the subsequent addition of the resulting succinic semialdehyde-thiamine pyrophosphate anion to isochorismate to yield 2-succinyl-5-enolpyruvyl-6-hydroxy-3-cyclohexene-1-carboxylate (SEPHCHC). This is 2-succinyl-5-enolpyruvyl-6-hydroxy-3-cyclohexene-1-carboxylate synthase from Roseiflexus sp. (strain RS-1).